A 409-amino-acid chain; its full sequence is uncharacterized protein (409 aa).

10 helical membrane-spanning segments follow: residues 18 to 38 (ALSA…ADVV), 47 to 67 (GPLL…TGVG), 100 to 120 (VVTV…ALVI), 159 to 179 (VGAM…GNAY), 180 to 200 (APAL…LLWL), 232 to 252 (FWLY…FGLL), 260 to 280 (GVLA…ADAL), 302 to 322 (ILSI…VVIG), 355 to 375 (GVFA…IGWL), and 380 to 400 (IGTL…MMFA).

The protein resides in the cell membrane. This is an uncharacterized protein from Mycobacterium tuberculosis (strain CDC 1551 / Oshkosh).